The sequence spans 207 residues: Casparian strip membrane protein 1 (207 aa).

Ala-2 carries the N-acetylalanine modification. The Cytoplasmic portion of the chain corresponds to 2–44 (AKESTTIDVGEPNTMTKSTSHVVVDEKKKKGFVAAAAGGGYKR). A helical transmembrane segment spans residues 45 to 65 (GLAVFDFLLRLAAIGITIGAS). Residues 66–95 (SVMFTAEETLPFFTQFLQFQAGYDDFPTFQ) are Extracellular-facing. The chain crosses the membrane as a helical span at residues 96 to 116 (FFVIAIAIVASYLVLSLPFSI). Residues 117-128 (VTIVRPLAVAPR) are Cytoplasmic-facing. Residues 129–149 (LILLISDTVVLTLTTAAAAAA) form a helical membrane-spanning segment. Topologically, residues 150–181 (ASIVYLAHNGNTNTNWLPICQQFGDFCQTAST) are extracellular. The helical transmembrane segment at 182–202 (AVVAASISVAFFVLLIVISAI) threads the bilayer. Topologically, residues 203 to 207 (ALKRH) are cytoplasmic.

The protein belongs to the Casparian strip membrane proteins (CASP) family. As to quaternary structure, homodimer and heterodimers.

Its subcellular location is the cell membrane. In terms of biological role, regulates membrane-cell wall junctions and localized cell wall deposition. Required for establishment of the Casparian strip membrane domain (CSD) and the subsequent formation of Casparian strips, a cell wall modification of the root endodermis that determines an apoplastic barrier between the intraorganismal apoplasm and the extraorganismal apoplasm and prevents lateral diffusion. In Raphanus raphanistrum (Wild radish), this protein is Casparian strip membrane protein 1.